We begin with the raw amino-acid sequence, 308 residues long: MEMEKNQHISSLDIPVIDLSNPDEELVASAVVKASQEWGIFQVVNHGIPTELILRLLQVGMEFFELPETEKEAVAKPEDSLDIEGYRTKYQKDLEGRNAWVDHLFHRIWPPSRVNHKFWPKNPPEYIEVNEEYASHIKKLSEKIMEWLSEGLGLRHEALKEGLGGETIEYLMKINYYPPCPDPELVVGAPDHTDVNGITLLVANEALGLQAFKDNQWIDAEYTTSGIIVIIGDQFLRMSNGKYKSVEHRAKMDKEKTRISWPVFVESSLDQVFGPLPELITGDENVPKFKPYVYKDYKFRKLKKLLLD.

Residues 167–267 (TIEYLMKINY…RISWPVFVES (101 aa)) form the Fe2OG dioxygenase domain. Residue 175 to 177 (NYY) participates in 2-oxoglutarate binding. Fe cation-binding residues include histidine 192, aspartate 194, and histidine 248. 2-oxoglutarate is bound at residue 258 to 260 (RIS).

It belongs to the iron/ascorbate-dependent oxidoreductase family. The cofactor is Fe(2+). In terms of tissue distribution, widely expressed at low levels.

It carries out the reaction a (2R,3R)-dihydroflavonol + 2-oxoglutarate + O2 = a flavonol + succinate + CO2 + H2O. It participates in secondary metabolite biosynthesis; flavonoid biosynthesis. Catalyzes the formation of flavonols from dihydroflavonols. Possesses low activity in vitro towards dihydrokaempferol and dihydroquercetin producing kaempferol and quercitin, respectively. The protein is Flavonol synthase 3 of Arabidopsis thaliana (Mouse-ear cress).